A 317-amino-acid chain; its full sequence is sn-1-specific diacylglycerol lipase ABHD11 (317 aa).

The N-terminal 20 residues, 1–20 (MSNFAMSALCRVFTRGAPCG), are a transit peptide targeting the mitochondrion. The 236-residue stretch at 69-304 (PLVFLHGLFG…ASHWIHADKP (236 aa)) folds into the AB hydrolase-1 domain. Active-site charge relay system residues include serine 142, glutamate 238, and histidine 297.

Belongs to the AB hydrolase superfamily. Post-translationally, phosphorylated.

The protein resides in the mitochondrion. It is found in the mitochondrion matrix. It catalyses the reaction 1-octadecanoyl-2-(5Z,8Z,11Z,14Z-eicosatetraenoyl)-sn-glycerol + H2O = 2-(5Z,8Z,11Z,14Z-eicosatetraenoyl)-glycerol + octadecanoate + H(+). It carries out the reaction a 1,2-diacyl-sn-glycerol + H2O = a 2-acylglycerol + a fatty acid + H(+). The enzyme catalyses a 1,3-diacyl-sn-glycerol + H2O = a 1-acyl-sn-glycerol + a fatty acid + H(+). The catalysed reaction is 1-octadecanoyl-2-(9Z-octadecenoyl)-sn-glycerol + H2O = 2-(9Z-octadecenoyl)-glycerol + octadecanoate + H(+). It catalyses the reaction 1-octadecanoyl-2-(4Z,7Z,10Z,13Z,16Z,19Z-docosahexaenoyl)-sn-glycerol + H2O = 2-(4Z,7Z,10Z,13Z,16Z,19Z-docosahexaenoyl)-glycerol + octadecanoate + H(+). It carries out the reaction 1,2-didecanoylglycerol + H2O = decanoylglycerol + decanoate + H(+). In terms of biological role, catalyzes the hydrolysis of diacylglycerol in vitro and may function as a key regulator in lipid metabolism, namely by regulating the intracellular levels of diacylglycerol. 1,2-diacyl-sn-glycerols are the preferred substrate over 1,3-diacyl-sn-glycerols. The enzyme hydrolyzes stearate in preference to palmitate from the sn-1 position of 1,2-diacyl-sn-glycerols. The sequence is that of sn-1-specific diacylglycerol lipase ABHD11 from Danio rerio (Zebrafish).